The sequence spans 330 residues: Phosphate acyltransferase (330 aa).

The protein belongs to the PlsX family. As to quaternary structure, homodimer. Probably interacts with PlsY.

Its subcellular location is the cytoplasm. The catalysed reaction is a fatty acyl-[ACP] + phosphate = an acyl phosphate + holo-[ACP]. It functions in the pathway lipid metabolism; phospholipid metabolism. Catalyzes the reversible formation of acyl-phosphate (acyl-PO(4)) from acyl-[acyl-carrier-protein] (acyl-ACP). This enzyme utilizes acyl-ACP as fatty acyl donor, but not acyl-CoA. This chain is Phosphate acyltransferase, found in Bacillus anthracis (strain A0248).